The chain runs to 300 residues: Epimerase family protein SAR0825 (300 aa).

This sequence belongs to the NAD(P)-dependent epimerase/dehydratase family. SDR39U1 subfamily.

The sequence is that of Epimerase family protein SAR0825 from Staphylococcus aureus (strain MRSA252).